The sequence spans 70 residues: uncharacterized protein (70 aa).

A helical membrane pass occupies residues V4 to Y24.

It is found in the host membrane. This is an uncharacterized protein from Dryophytes versicolor (chameleon treefrog).